The following is a 184-amino-acid chain: Ribosome-recycling factor (184 aa).

Belongs to the RRF family.

The protein localises to the cytoplasm. In terms of biological role, responsible for the release of ribosomes from messenger RNA at the termination of protein biosynthesis. May increase the efficiency of translation by recycling ribosomes from one round of translation to another. The polypeptide is Ribosome-recycling factor (Oleidesulfovibrio alaskensis (strain ATCC BAA-1058 / DSM 17464 / G20) (Desulfovibrio alaskensis)).